The chain runs to 275 residues: DNA repair protein RecO (275 aa).

The interval 1–38 (MTDEADADPQPFAAPPATGAPAADKPARKPRRAAPRTS) is disordered. A compositionally biased stretch (low complexity) spans 8–24 (DPQPFAAPPATGAPAAD).

The protein belongs to the RecO family.

Involved in DNA repair and RecF pathway recombination. The sequence is that of DNA repair protein RecO from Burkholderia pseudomallei (strain 1710b).